The primary structure comprises 720 residues: MRIGKSSGWLNESVSLEYEHVSPPTRPRDTRRRPRAASDGGLAHLHRRLAVGYAEDTPRTGARSPAPRRPLPVAPASAPPAPSLVPEPPMPVSLPVVSSPRFSAGSSAAITDPFSSLPPTPVLYAMARELKALSDATWQPAVPLPAEPPTDARRGNTVFDEASASSPVIASACPQAFASPPRAPRSARARRARTGGDAWPAPTFLSRPSSSRIGRDVFGKLVALGYSREQIRKLKQESLSEIAKYHTTLTGQGFTHADICRISRRRQSLRVVARNYPELAAALPELTRAHIVDIARQRSGDLALQALLPVATALTAAPLRLSASQIATVAQYGERPAIQALYRLRRKLTRAPLHLTPQQVVAIASHDGGKPALEAVWAKLPVLRGVPYALSTAQVVAIACISGQQALEAIEAHMPTLRQAPHSLSPERVAAIACIGGRSAVEAVRQGLPVKAIRRIRREKAPVAGPPPASLGPTPQELVAVLHFFRAHQQPRQAFVDALAAFQTTRPALLRLLSSVGVTEIEALGGTIPDATERWQRLLGRLGFRPATGAAAPSPDSLQGFAQSLERTLGSPGMAGQSACSPHRKRPAETAIAPRSIRRRPNNAGQPSEPWPDQLAWLQRRKRTARSHIRADSAASVPANLHLGTRAQFTPDRLRAEPGPIMQAHTSPASVSFGSHVAFEPGLPDPGTPTSADLASFEAEPFGVGPLDFHLDWLLQILEA.

2 disordered regions span residues 13 to 85 and 175 to 205; these read SVSL…PSLV and QAFA…PTFL. The segment covering 67–85 has biased composition (pro residues); that stretch reads PRRPLPVAPASAPPAPSLV. The Nuclear localization signal 1 motif lies at 185 to 191; that stretch reads RSARARR. A Cryptic repeat -1 repeat occupies 286–320; the sequence is LTRAHIVDIARQRSGDLALQALLPVATALTAAPLR. One copy of the Cryptic repeat 0 repeat lies at 321–354; the sequence is LSASQIATVAQYGERPAIQALYRLRRKLTRAPLH. Residues 355 to 389 form a Core repeat 1 repeat; it reads LTPQQVVAIASHDGGKPALEAVWAKLPVLRGVPYA. The Cryptic repeat +1 repeat unit spans residues 390–423; sequence LSTAQVVAIACISGQQALEAIEAHMPTLRQAPHS. A Cryptic repeat +2 repeat occupies 424–457; it reads LSPERVAAIACIGGRSAVEAVRQGLPVKAIRRIR. 3 consecutive short sequence motifs (nuclear localization signal) follow at residues 455–458, 583–586, and 620–623; these read RIRR, HRKR, and RRKR. The interval 571–611 is disordered; it reads SPGMAGQSACSPHRKRPAETAIAPRSIRRRPNNAGQPSEPW.

The protein belongs to the transcription activator-like effector (TALE) family. RipTAL/RTL subfamily.

The protein resides in the secreted. The protein localises to the host nucleus. In terms of biological role, does not activate plant gene transcription, because it has too few core repeats. This Ralstonia solanacearum (Pseudomonas solanacearum) protein is TAL effector protein Rip19.